The chain runs to 172 residues: Small ribosomal subunit protein uS5 (172 aa).

Residues 17 to 80 (LREKMIAVNR…DEARRKMIKV (64 aa)) enclose the S5 DRBM domain.

Belongs to the universal ribosomal protein uS5 family. As to quaternary structure, part of the 30S ribosomal subunit. Contacts proteins S4 and S8.

Functionally, with S4 and S12 plays an important role in translational accuracy. Located at the back of the 30S subunit body where it stabilizes the conformation of the head with respect to the body. This chain is Small ribosomal subunit protein uS5, found in Polynucleobacter asymbioticus (strain DSM 18221 / CIP 109841 / QLW-P1DMWA-1) (Polynucleobacter necessarius subsp. asymbioticus).